A 646-amino-acid polypeptide reads, in one-letter code: WW domain-containing adapter protein with coiled-coil (646 aa).

A disordered region spans residues 1 to 138; that stretch reads MVMYARKQQR…YDSADDWSEH (138 aa). Over residues 23-37 the composition is skewed to polar residues; sequence QPFQALKYSSKSHPS. Residues 38–50 are compositionally biased toward basic and acidic residues; that stretch reads SGDHRHEKMRDAA. S53 is subject to Phosphoserine. A compositionally biased stretch (polar residues) spans 61–75; it reads RSNSPENKYSDSTGH. The segment covering 103–122 has biased composition (low complexity); the sequence is NHSALHSSNSHSSNPSNNPS. A WW domain is found at 129–162; that stretch reads YDSADDWSEHISSSGKKYYYNCRTEVSQWEKPKE. 2 positions are modified to phosphoserine: S131 and S142. Composition is skewed to basic and acidic residues over residues 158–174 and 182–191; these read EKPKEWLEREQRQKEAN and PKDRDYRREV. 2 disordered regions span residues 158-352 and 428-541; these read EKPK…PQST and TQAQ…TATV. A compositionally biased stretch (polar residues) spans 211 to 225; sequence DASSLLPQNILSQTS. S225 carries the phosphoserine modification. Residues 226–239 show a composition bias toward basic and acidic residues; the sequence is RHNDKDYRLPRAET. Residues 252-267 show a composition bias toward low complexity; it reads PVVHPTATPSTVPSSP. The segment covering 284 to 300 has biased composition (polar residues); that stretch reads GASTLSKLPTPTASLPA. T293 is modified (phosphothreonine). Residue K302 is modified to N6-acetyllysine. Over residues 316–331 the composition is skewed to polar residues; sequence SHSCTTPSTSSASGLN. The segment covering 332–351 has biased composition (low complexity); that stretch reads PTSAPPTSASAVPVSPVPQS. The segment covering 428-463 has biased composition (polar residues); it reads TQAQPSNQSPMSLTSDASSPRSYVSPRISTPQTNTV. Position 446 is a phosphoserine (S446). Phosphothreonine is present on T471. The segment covering 490–503 has biased composition (polar residues); sequence VSHSATQQPVTADK. Phosphoserine occurs at positions 511, 523, and 525. Positions 511–524 are enriched in low complexity; that stretch reads SPRSLQRLSSQRSP. The segment covering 528-541 has biased composition (polar residues); the sequence is PNHTCSSNASTATV. A coiled-coil region spans residues 617 to 643; sequence QATLREQRILFLRQQIKELEKLKNQNS.

Interacts (via coiled coil domain) with RNF20, RNF40 and UBE2A. Interacts (via WW domain) with RNA polymerase II. Interacts with MTOR and other components of the MTOR pathway including RPTOR, RUVBL1, RUVBL2, TTI1 and TTI2. In terms of processing, phosphorylated on tyrosine residues.

The protein localises to the nucleus speckle. It is found in the nucleus. Acts as a linker between gene transcription and histone H2B monoubiquitination at 'Lys-120' (H2BK120ub1). Interacts with the RNA polymerase II transcriptional machinery via its WW domain and with RNF20-RNF40 via its coiled coil region, thereby linking and regulating H2BK120ub1 and gene transcription. Regulates the cell-cycle checkpoint activation in response to DNA damage. Positive regulator of amino acid starvation-induced autophagy. Also acts as a negative regulator of basal autophagy. Positively regulates MTOR activity by promoting, in an energy-dependent manner, the assembly of the TTT complex composed of TELO2, TTI1 and TTI2 and the RUVBL complex composed of RUVBL1 and RUVBL2 into the TTT-RUVBL complex. This leads to the dimerization of the mTORC1 complex and its subsequent activation. May negatively regulate the ubiquitin proteasome pathway. This Mus musculus (Mouse) protein is WW domain-containing adapter protein with coiled-coil (Wac).